We begin with the raw amino-acid sequence, 941 residues long: MNKKKKPFLGMPAPLGYVPGLGRGATGFTTRSDIGPARDANDPVDDRHAPPGKRTVGDQMKKNQAADDDDEDLNDTNYDEFNGYAGSLFSSGPYEKDDEEADAIYAALDKRMDERRKERREQREKEEIEKYRMERPKIQQQFSDLKRKLAEVTEEEWLSIPEVGDARNKRQRNPRYEKLTPVPDSFFAKHLQTGENHTSVDPRQTQFGGLNTPYPGGLNTPYPGGMTPGLMTPGTGELDMRKIGQARNTLMDMRLSQVSDSVSGQTVVDPKGYLTDLNSMIPTHGGDINDIKKARLLLKSVRETNPHHPPAWIASARLEEVTGKLQVARNLIMKGTEMCPKSEDVWLEAARLQPGDTAKAVVAQAVRHLPQSVRIYIRAAELETDIRAKKRVLRKALEHVPNSVRLWKAAVELEEPEDARIMLSRAVECCPTSVELWLALARLETYENARKVLNKARENIPTDRHIWITAAKLEEANGNTQMVEKIIDRAITSLRANGVEINREQWIQDAEECDRAGSVATCQAVMRAVIGIGIEEEDRKHTWMEDADSCVAHNALECARAIYAYALQVFPSKKSVWLRAAYFEKNHGTRESLEALLQRAVAHCPKAEVLWLMGAKSKWLAGDVPAARSILALAFQANPNSEEIWLAAVKLESENNEYERARRLLAKARSSAPTARVFMKSVKLEWVLGNITAAQELCEEALRHYEDFPKLWMMKGQIEEQGELMERAREAYNQGLKKCPHSTPLWLLLSRLEEKIGQLTRARAILEKSRLKNPKNPGLWLESVRLEYRAGLKNIANTLMAKALQECPNSGILWSEAVFLEARPQRKTKSVDALKKCEHDPHVLLAVAKLFWSERKITKAREWFHRTVKIDSDLGDAWAFFYKFELQHGTEEQQEEVRKRCENAEPRHGELWCAVSKDITNWQRKIGEILVLVAARIKNTF.

A disordered region spans residues 1 to 79 (MNKKKKPFLG…DEDLNDTNYD (79 aa)). Residues 39 to 65 (DANDPVDDRHAPPGKRTVGDQMKKNQA) are compositionally biased toward basic and acidic residues. Residues 66–78 (ADDDDEDLNDTNY) show a composition bias toward acidic residues. Ser-143 bears the Phosphoserine mark. Phosphothreonine is present on residues Thr-180, Thr-266, and Thr-275. Ser-279 bears the Phosphoserine mark. HAT repeat units follow at residues 384-416 (TDIR…LEEP), 418-444 (DARI…ARLE), 445-476 (TYEN…LEEA), 554-586 (NALE…FEKN), 588-620 (GTRE…SKWL), 622-654 (GDVP…LESE), 689-721 (GNIT…IEEQ), 723-755 (ELME…LEEK), and 855-887 (RKIT…FELQ).

In terms of assembly, identified in the spliceosome B complex. Identified in the spliceosome C complex. Associates with the U5 snRNP particle. Component of the U4/U6-U5 tri-snRNP complex composed of the U4, U6 and U5 snRNAs and at least PRPF3, PRPF4, PRPF6, PRPF8, PRPF31, SNRNP200, TXNL4A, SNRNP40, DDX23, CD2BP2, PPIH, SNU13, EFTUD2, SART1 and USP39, LSm proteins LSm2-8 and Sm proteins. Interacts with ARAF1. Interacts with AR and NR3C1, but not ESR1, independently of the presence of hormones. Interacts with USH1G. In terms of processing, phosphorylated by PRP4K during spliceosome assembly.

Its subcellular location is the nucleus. The protein resides in the nucleoplasm. The protein localises to the nucleus speckle. Functionally, involved in pre-mRNA splicing as component of the U4/U6-U5 tri-snRNP complex, one of the building blocks of the spliceosome. Enhances dihydrotestosterone-induced transactivation activity of AR, as well as dexamethasone-induced transactivation activity of NR3C1, but does not affect estrogen-induced transactivation. In Rattus norvegicus (Rat), this protein is Pre-mRNA-processing factor 6 (Prpf6).